The primary structure comprises 322 residues: Ethylmalonyl-CoA decarboxylase (322 aa).

Lysine 232 is modified (N6-acetyllysine; alternate). Position 232 is an N6-succinyllysine; alternate (lysine 232). An N6-succinyllysine modification is found at lysine 316.

Belongs to the enoyl-CoA hydratase/isomerase family.

It is found in the cytoplasm. The protein localises to the cytosol. The enzyme catalyses (2S)-ethylmalonyl-CoA + H(+) = butanoyl-CoA + CO2. It catalyses the reaction (S)-methylmalonyl-CoA + H(+) = propanoyl-CoA + CO2. The catalysed reaction is (2R)-ethylmalonyl-CoA + H(+) = butanoyl-CoA + CO2. In terms of biological role, decarboxylates ethylmalonyl-CoA, a potentially toxic metabolite, to form butyryl-CoA, suggesting it might be involved in metabolite proofreading. Acts preferentially on (S)-ethylmalonyl-CoA but also has some activity on the (R)-isomer. Also has methylmalonyl-CoA decarboxylase activity at lower level. This Mus musculus (Mouse) protein is Ethylmalonyl-CoA decarboxylase (Echdc1).